Here is a 150-residue protein sequence, read N- to C-terminus: MLGAALRRCAVAATTWAGPRGLLHSSRTPGPAAAIQSVRCYSHGSHETDEEFDARWVTYFNKPDIDAWELRKGINTLVTYDLVPEPKIIDAALRACRRLNDFASTVRILEAVKDKAGPHKEIYPYVIQELRPTLNELGISTPEELGLDKV.

The N-terminal 41 residues, 1 to 41 (MLGAALRRCAVAATTWAGPRGLLHSSRTPGPAAAIQSVRCY), are a transit peptide targeting the mitochondrion. Residues 2–17 (LGAALRRCAVAATTWA) carry the SIFI-degron motif. N6-acetyllysine is present on residues lysine 87 and lysine 113. Phosphothreonine is present on threonine 141.

Belongs to the cytochrome c oxidase subunit 5A family. As to quaternary structure, component of the cytochrome c oxidase (complex IV, CIV), a multisubunit enzyme composed of 14 subunits. The complex is composed of a catalytic core of 3 subunits MT-CO1, MT-CO2 and MT-CO3, encoded in the mitochondrial DNA, and 11 supernumerary subunits COX4I, COX5A, COX5B, COX6A, COX6B, COX6C, COX7A, COX7B, COX7C, COX8 and NDUFA4, which are encoded in the nuclear genome. The complex exists as a monomer or a dimer and forms supercomplexes (SCs) in the inner mitochondrial membrane with NADH-ubiquinone oxidoreductase (complex I, CI) and ubiquinol-cytochrome c oxidoreductase (cytochrome b-c1 complex, complex III, CIII), resulting in different assemblies (supercomplex SCI(1)III(2)IV(1) and megacomplex MCI(2)III(2)IV(2)). Interacts with AFG1L. Interacts with RAB5IF. In response to mitochondrial stress, the precursor protein is ubiquitinated by the SIFI complex in the cytoplasm before mitochondrial import, leading to its degradation. Within the SIFI complex, UBR4 initiates ubiquitin chain that are further elongated or branched by KCMF1.

The protein localises to the mitochondrion inner membrane. It participates in energy metabolism; oxidative phosphorylation. Its function is as follows. Component of the cytochrome c oxidase, the last enzyme in the mitochondrial electron transport chain which drives oxidative phosphorylation. The respiratory chain contains 3 multisubunit complexes succinate dehydrogenase (complex II, CII), ubiquinol-cytochrome c oxidoreductase (cytochrome b-c1 complex, complex III, CIII) and cytochrome c oxidase (complex IV, CIV), that cooperate to transfer electrons derived from NADH and succinate to molecular oxygen, creating an electrochemical gradient over the inner membrane that drives transmembrane transport and the ATP synthase. Cytochrome c oxidase is the component of the respiratory chain that catalyzes the reduction of oxygen to water. Electrons originating from reduced cytochrome c in the intermembrane space (IMS) are transferred via the dinuclear copper A center (CU(A)) of subunit 2 and heme A of subunit 1 to the active site in subunit 1, a binuclear center (BNC) formed by heme A3 and copper B (CU(B)). The BNC reduces molecular oxygen to 2 water molecules using 4 electrons from cytochrome c in the IMS and 4 protons from the mitochondrial matrix. The polypeptide is Cytochrome c oxidase subunit 5A, mitochondrial (COX5A) (Colobus guereza (Mantled guereza)).